Here is a 253-residue protein sequence, read N- to C-terminus: 5'-nucleotidase SurE (253 aa).

Positions 8, 9, 39, and 95 each coordinate a divalent metal cation.

This sequence belongs to the SurE nucleotidase family. A divalent metal cation is required as a cofactor.

The protein localises to the cytoplasm. It carries out the reaction a ribonucleoside 5'-phosphate + H2O = a ribonucleoside + phosphate. Functionally, nucleotidase that shows phosphatase activity on nucleoside 5'-monophosphates. This is 5'-nucleotidase SurE from Clostridium beijerinckii (strain ATCC 51743 / NCIMB 8052) (Clostridium acetobutylicum).